A 311-amino-acid chain; its full sequence is Tryptophan 2,3-dioxygenase (311 aa).

The segment at M1 to D37 is disordered. The segment covering A17 to H27 has biased composition (low complexity). Substrate is bound by residues F80–H84, Y142, and R146. Position 269 (H269) interacts with heme. Substrate is bound at residue T283.

This sequence belongs to the tryptophan 2,3-dioxygenase family. As to quaternary structure, homotetramer. It depends on heme as a cofactor.

It carries out the reaction L-tryptophan + O2 = N-formyl-L-kynurenine. Its pathway is amino-acid degradation; L-tryptophan degradation via kynurenine pathway; L-kynurenine from L-tryptophan: step 1/2. In terms of biological role, heme-dependent dioxygenase that catalyzes the oxidative cleavage of the L-tryptophan (L-Trp) pyrrole ring and converts L-tryptophan to N-formyl-L-kynurenine. Catalyzes the oxidative cleavage of the indole moiety. The sequence is that of Tryptophan 2,3-dioxygenase from Burkholderia orbicola (strain MC0-3).